The chain runs to 409 residues: Dihydrolipoyllysine-residue succinyltransferase component of 2-oxoglutarate dehydrogenase complex (409 aa).

Positions 2–77 (AIEILVPDLP…VSKQLLGKIS (76 aa)) constitute a Lipoyl-binding domain. Residue Lys-43 is modified to N6-lipoyllysine. Positions 83–107 (DVSSATLKATNEPTPSDRQNAAIEN) are enriched in polar residues. Residues 83-114 (DVSSATLKATNEPTPSDRQNAAIENSHNHNAD) form a disordered region. The Peripheral subunit-binding (PSBD) domain maps to 114-151 (DQSPVIRRLLAEHDLQADQIQGSGVGGRLTREDIEREI). Catalysis depends on residues His-380 and Asp-384.

Belongs to the 2-oxoacid dehydrogenase family. Forms a 24-polypeptide structural core with octahedral symmetry. Part of the 2-oxoglutarate dehydrogenase (OGDH) complex composed of E1 (2-oxoglutarate dehydrogenase), E2 (dihydrolipoamide succinyltransferase) and E3 (dihydrolipoamide dehydrogenase); the complex contains multiple copies of the three enzymatic components (E1, E2 and E3). (R)-lipoate serves as cofactor.

It carries out the reaction N(6)-[(R)-dihydrolipoyl]-L-lysyl-[protein] + succinyl-CoA = N(6)-[(R)-S(8)-succinyldihydrolipoyl]-L-lysyl-[protein] + CoA. Its pathway is amino-acid degradation; L-lysine degradation via saccharopine pathway; glutaryl-CoA from L-lysine: step 6/6. In terms of biological role, E2 component of the 2-oxoglutarate dehydrogenase (OGDH) complex which catalyzes the second step in the conversion of 2-oxoglutarate to succinyl-CoA and CO(2). The protein is Dihydrolipoyllysine-residue succinyltransferase component of 2-oxoglutarate dehydrogenase complex (sucB) of Haemophilus influenzae (strain ATCC 51907 / DSM 11121 / KW20 / Rd).